Here is a 545-residue protein sequence, read N- to C-terminus: Inosine-5'-monophosphate dehydrogenase (545 aa).

CBS domains lie at 138–194 and 201–258; these read MITD…DYDT and MTKE…PDAT. NAD(+) is bound by residues Asp-295 and 347 to 349; that span reads GIG. The K(+) site is built by Gly-349 and Gly-351. An IMP-binding site is contributed by Ser-352. A K(+)-binding site is contributed by Cys-354. The Thioimidate intermediate role is filled by Cys-354. IMP is bound by residues 387–389, 410–411, and 434–438; these read DGG, GG, and YRGMG. Residue Arg-455 is the Proton acceptor of the active site. Glu-470 lines the IMP pocket. K(+)-binding residues include Glu-524, Ser-525, and His-526.

The protein belongs to the IMPDH/GMPR family. In terms of assembly, homotetramer. K(+) serves as cofactor.

The catalysed reaction is IMP + NAD(+) + H2O = XMP + NADH + H(+). It participates in purine metabolism; XMP biosynthesis via de novo pathway; XMP from IMP: step 1/1. With respect to regulation, mycophenolic acid (MPA) is a non-competitive inhibitor that prevents formation of the closed enzyme conformation by binding to the same site as the amobile flap. In contrast, mizoribine monophosphate (MZP) is a competitive inhibitor that induces the closed conformation. MPA is a potent inhibitor of mammalian IMPDHs but a poor inhibitor of the bacterial enzymes. MZP is a more potent inhibitor of bacterial IMPDH. Its function is as follows. Catalyzes the conversion of inosine 5'-phosphate (IMP) to xanthosine 5'-phosphate (XMP), the first committed and rate-limiting step in the de novo synthesis of guanine nucleotides, and therefore plays an important role in the regulation of cell growth. The polypeptide is Inosine-5'-monophosphate dehydrogenase (Bifidobacterium longum (strain NCC 2705)).